A 202-amino-acid polypeptide reads, in one-letter code: Peptide deformylase 2 (202 aa).

Fe cation is bound by residues cysteine 120 and histidine 162. The active site involves glutamate 163. Histidine 166 contacts Fe cation.

The protein belongs to the polypeptide deformylase family. Fe(2+) serves as cofactor.

It catalyses the reaction N-terminal N-formyl-L-methionyl-[peptide] + H2O = N-terminal L-methionyl-[peptide] + formate. Removes the formyl group from the N-terminal Met of newly synthesized proteins. Requires at least a dipeptide for an efficient rate of reaction. N-terminal L-methionine is a prerequisite for activity but the enzyme has broad specificity at other positions. This is Peptide deformylase 2 from Rickettsia conorii (strain ATCC VR-613 / Malish 7).